The following is a 367-amino-acid chain: MKEPLDLSKYSVRTDLAVEAHQMLQESQEEQKGIQGVIVKEREEEGTIITKVTIDEAASEAMGKKPGNYLTLEVQGIRQQDTELQQKVERIFAKEFSYFLEEVGVTKEASCLIVGLGNWNVTPDALGPIVVENVLVTRHLFQLQPESVEEGFRPVSAIRPGVMGITGIETSDVIYGIIEKTNPDFVIAIDALAARSIERVNSTIQISDTGIHPGSGVGNKRKELSKETLGIPVIAIGVPTVVDAVSITSDTIDFILKHFGREMKEGNKPSRSLLPAGFSFGEKKKLTEEDMPDEKSRNMFLGAVGTLEEEEKRRLIYEVLSPLGHNLMVTPKEVDTFIEDMANVIASGLNAALHHQIDQDNTGAYTH.

A propeptide spanning residues 1–15 is cleaved from the precursor; that stretch reads MKEPLDLSKYSVRTD.

It belongs to the peptidase A25 family. Homotetramer. In terms of processing, autoproteolytically processed. The inactive tetrameric zymogen termed p46 autoprocesses to a smaller form termed p41, which is active only during spore germination.

It carries out the reaction Endopeptidase action with P4 Glu or Asp, P1 preferably Glu &gt; Asp, P1' hydrophobic and P2' Ala.. Its function is as follows. Initiates the rapid degradation of small, acid-soluble proteins during spore germination. The sequence is that of Germination protease from Bacillus cereus (strain G9842).